Here is a 213-residue protein sequence, read N- to C-terminus: Thiamine-phosphate synthase (213 aa).

Residues 40–44 (QFREK) and N75 contribute to the 4-amino-2-methyl-5-(diphosphooxymethyl)pyrimidine site. Mg(2+) contacts are provided by D76 and D95. Position 113 (S113) interacts with 4-amino-2-methyl-5-(diphosphooxymethyl)pyrimidine. 139–141 (TPS) contacts 2-[(2R,5Z)-2-carboxy-4-methylthiazol-5(2H)-ylidene]ethyl phosphate. K142 lines the 4-amino-2-methyl-5-(diphosphooxymethyl)pyrimidine pocket. 2-[(2R,5Z)-2-carboxy-4-methylthiazol-5(2H)-ylidene]ethyl phosphate contacts are provided by residues G171 and 191–192 (IS).

The protein belongs to the thiamine-phosphate synthase family. Requires Mg(2+) as cofactor.

It carries out the reaction 2-[(2R,5Z)-2-carboxy-4-methylthiazol-5(2H)-ylidene]ethyl phosphate + 4-amino-2-methyl-5-(diphosphooxymethyl)pyrimidine + 2 H(+) = thiamine phosphate + CO2 + diphosphate. The catalysed reaction is 2-(2-carboxy-4-methylthiazol-5-yl)ethyl phosphate + 4-amino-2-methyl-5-(diphosphooxymethyl)pyrimidine + 2 H(+) = thiamine phosphate + CO2 + diphosphate. It catalyses the reaction 4-methyl-5-(2-phosphooxyethyl)-thiazole + 4-amino-2-methyl-5-(diphosphooxymethyl)pyrimidine + H(+) = thiamine phosphate + diphosphate. The protein operates within cofactor biosynthesis; thiamine diphosphate biosynthesis; thiamine phosphate from 4-amino-2-methyl-5-diphosphomethylpyrimidine and 4-methyl-5-(2-phosphoethyl)-thiazole: step 1/1. Its function is as follows. Condenses 4-methyl-5-(beta-hydroxyethyl)thiazole monophosphate (THZ-P) and 2-methyl-4-amino-5-hydroxymethyl pyrimidine pyrophosphate (HMP-PP) to form thiamine monophosphate (TMP). The sequence is that of Thiamine-phosphate synthase from Staphylococcus aureus (strain JH1).